We begin with the raw amino-acid sequence, 259 residues long: Phosphatidylglycerol--prolipoprotein diacylglyceryl transferase (259 aa).

4 helical membrane-spanning segments follow: residues 12–32 (LSLH…VYLA), 46–66 (IIDF…IYYV), 83–103 (IWNG…VLFV), and 109–129 (VLNP…AQAI). Arg-131 contributes to the a 1,2-diacyl-sn-glycero-3-phospho-(1'-sn-glycerol) binding site. A run of 3 helical transmembrane segments spans residues 167-187 (VPTF…IMVW), 194-214 (LLDG…RLVI), and 226-246 (GIRV…VFIF).

The protein belongs to the Lgt family.

The protein localises to the cell membrane. The catalysed reaction is L-cysteinyl-[prolipoprotein] + a 1,2-diacyl-sn-glycero-3-phospho-(1'-sn-glycerol) = an S-1,2-diacyl-sn-glyceryl-L-cysteinyl-[prolipoprotein] + sn-glycerol 1-phosphate + H(+). Its pathway is protein modification; lipoprotein biosynthesis (diacylglyceryl transfer). In terms of biological role, catalyzes the transfer of the diacylglyceryl group from phosphatidylglycerol to the sulfhydryl group of the N-terminal cysteine of a prolipoprotein, the first step in the formation of mature lipoproteins. The sequence is that of Phosphatidylglycerol--prolipoprotein diacylglyceryl transferase from Streptococcus equi subsp. zooepidemicus (strain H70).